The primary structure comprises 119 residues: MVSKVSVTRRAGRVRRKLKAVATERPRLSVYRSSKHIYAQVIDDVKGHTLAAASSLDKDLREKLKTGADVDAAGVVGKLIAERAKKAGIDKVVFDRGPYIYHGRVKALADAAREGGLEF.

Belongs to the universal ribosomal protein uL18 family. As to quaternary structure, part of the 50S ribosomal subunit; part of the 5S rRNA/L5/L18/L25 subcomplex. Contacts the 5S and 23S rRNAs.

Functionally, this is one of the proteins that bind and probably mediate the attachment of the 5S RNA into the large ribosomal subunit, where it forms part of the central protuberance. The protein is Large ribosomal subunit protein uL18 of Chelativorans sp. (strain BNC1).